Reading from the N-terminus, the 306-residue chain is N-acetylmuramic acid 6-phosphate etherase (306 aa).

The SIS domain maps to 59–222 (ISEALRQGGR…STGAMVQLGK (164 aa)). Residue Glu-87 is the Proton donor of the active site. Glu-118 is a catalytic residue.

It belongs to the GCKR-like family. MurNAc-6-P etherase subfamily. Homodimer.

It carries out the reaction N-acetyl-D-muramate 6-phosphate + H2O = N-acetyl-D-glucosamine 6-phosphate + (R)-lactate. It functions in the pathway amino-sugar metabolism; N-acetylmuramate degradation. In terms of biological role, specifically catalyzes the cleavage of the D-lactyl ether substituent of MurNAc 6-phosphate, producing GlcNAc 6-phosphate and D-lactate. This Gloeothece citriformis (strain PCC 7424) (Cyanothece sp. (strain PCC 7424)) protein is N-acetylmuramic acid 6-phosphate etherase.